The primary structure comprises 238 residues: Large ribosomal subunit protein uL1 (238 aa).

It belongs to the universal ribosomal protein uL1 family. Part of the 50S ribosomal subunit.

In terms of biological role, binds directly to 23S rRNA. The L1 stalk is quite mobile in the ribosome, and is involved in E site tRNA release. Protein L1 is also a translational repressor protein, it controls the translation of the L11 operon by binding to its mRNA. In Gloeobacter violaceus (strain ATCC 29082 / PCC 7421), this protein is Large ribosomal subunit protein uL1.